The chain runs to 393 residues: NAD(P)H-quinone oxidoreductase subunit H, chloroplastic (393 aa).

Belongs to the complex I 49 kDa subunit family. In terms of assembly, NDH is composed of at least 16 different subunits, 5 of which are encoded in the nucleus.

Its subcellular location is the plastid. It is found in the chloroplast thylakoid membrane. The enzyme catalyses a plastoquinone + NADH + (n+1) H(+)(in) = a plastoquinol + NAD(+) + n H(+)(out). It catalyses the reaction a plastoquinone + NADPH + (n+1) H(+)(in) = a plastoquinol + NADP(+) + n H(+)(out). Functionally, NDH shuttles electrons from NAD(P)H:plastoquinone, via FMN and iron-sulfur (Fe-S) centers, to quinones in the photosynthetic chain and possibly in a chloroplast respiratory chain. The immediate electron acceptor for the enzyme in this species is believed to be plastoquinone. Couples the redox reaction to proton translocation, and thus conserves the redox energy in a proton gradient. The chain is NAD(P)H-quinone oxidoreductase subunit H, chloroplastic from Platanus occidentalis (Sycamore).